Consider the following 100-residue polypeptide: Urease subunit gamma (100 aa).

The protein belongs to the urease gamma subunit family. As to quaternary structure, heterotrimer of UreA (gamma), UreB (beta) and UreC (alpha) subunits. Three heterotrimers associate to form the active enzyme.

It localises to the cytoplasm. The catalysed reaction is urea + 2 H2O + H(+) = hydrogencarbonate + 2 NH4(+). Its pathway is nitrogen metabolism; urea degradation; CO(2) and NH(3) from urea (urease route): step 1/1. The polypeptide is Urease subunit gamma (Enterobacter sp. (strain 638)).